We begin with the raw amino-acid sequence, 212 residues long: MRVRNRKGATELLEAHPQYVILNPADAKGRWQEIFGNDHPIHVEVGSGKGAFVSGMAKANPEINYIGIDIQKSVLSYALDKVLATDVPNIKLLWVDGSDLTDYFEEGEIDRLYLNFSDPWPKKRHEKRRLTYQSFLATYQQILPENGEIHFKTDNRGLFEYSLVSFSQYGMKLKGVWLDLHASDFEDNVLTEYEQKFANKGQVIYRVEAAFE.

Residues Glu-44, Asp-69, Asp-96, and Asp-118 each coordinate S-adenosyl-L-methionine. The active site involves Asp-118. A substrate-binding site is contributed by Lys-122. Positions 124–129 (RHEKRR) are interaction with RNA. Substrate is bound by residues Asp-154 and 191–194 (TEYE).

Belongs to the class I-like SAM-binding methyltransferase superfamily. TrmB family.

It catalyses the reaction guanosine(46) in tRNA + S-adenosyl-L-methionine = N(7)-methylguanosine(46) in tRNA + S-adenosyl-L-homocysteine. Its pathway is tRNA modification; N(7)-methylguanine-tRNA biosynthesis. Functionally, catalyzes the formation of N(7)-methylguanine at position 46 (m7G46) in tRNA. This is tRNA (guanine-N(7)-)-methyltransferase from Streptococcus sanguinis (strain SK36).